Consider the following 1039-residue polypeptide: FHIP family protein GG24907 (1039 aa).

Phosphoserine occurs at positions 498 and 805. Disordered regions lie at residues 831–877, 904–945, and 957–984; these read ATPT…SASS, GISQ…SNSS, and SNTTTHSASTLHGLDGGPSTGGFNSEPA. 2 stretches are compositionally biased toward polar residues: residues 855 to 877 and 904 to 924; these read TSMFSRKSASTSTTPPNGSSASS and GISQAQTSAGTCETSLSTQPQ. Residues 925–945 are compositionally biased toward low complexity; sequence AGASRTGATATSAAASGSNSS. The span at 957–966 shows a compositional bias: polar residues; it reads SNTTTHSAST.

Belongs to the FHIP family.

The chain is FHIP family protein GG24907 from Drosophila erecta (Fruit fly).